Reading from the N-terminus, the 947-residue chain is Protocadherin alpha-4 (947 aa).

The first 29 residues, 1-29 (MEFSWGSGQESRRLLLLLLLLSAWEAGNG), serve as a signal peptide directing secretion. Cadherin domains follow at residues 30 to 133 (QLHY…PPVF), 134 to 242 (PATQ…APAF), 243 to 350 (DRTI…VPDL), 351 to 455 (EFKS…APAF), 456 to 565 (AQPE…APAL), and 588 to 678 (DHVV…APKA). Topologically, residues 30–697 (QLHYSVSEEA…GPDAALVDVN (668 aa)) are extracellular. Cysteine 96 and cysteine 102 are disulfide-bonded. 3 N-linked (GlcNAc...) asparagine glycosylation sites follow: asparagine 139, asparagine 257, and asparagine 265. The N-linked (GlcNAc...) asparagine glycan is linked to asparagine 548. A helical transmembrane segment spans residues 698–718 (VYLIIAICAVSSLLVLTLLLY). The Cytoplasmic segment spans residues 719–947 (TALRCSAPPT…GNSTTDNSDQ (229 aa)). PXXP repeat units lie at residues 734–737 (PGKP), 774–777 (PSLP), 796–799 (PRQP), 829–832 (PGGP), 870–873 (PGNP), and 888–891 (PGSP). The 6 X 4 AA repeats of P-X-X-P stretch occupies residues 734–891 (PGKPTLVCSS…PDKFIIPGSP (158 aa)). The interval 738–947 (TLVCSSAVGS…GNSTTDNSDQ (210 aa)) is required for interaction with FYN. Disordered stretches follow at residues 754–805 (RRPR…DWRY) and 828–853 (GPGGPDQQWPTVSSATPEPEAGEVSP). The segment at 892–947 (AIISIRQEPANSQIDKSDFITFGKKEETKKKKKKKKGNKTQEKKEKGNSTTDNSDQ) is disordered. Positions 906 to 920 (DKSDFITFGKKEETK) are enriched in basic and acidic residues.

As to quaternary structure, forms homodimers in trans (molecules expressed by two different cells). Forms promiscuous heterodimers in cis (at the plasma membrane of the same cell) with other protocadherins. Interacts with FYN.

It is found in the cell membrane. Its function is as follows. Calcium-dependent cell-adhesion protein involved in cells self-recognition and non-self discrimination. Thereby, it is involved in the establishment and maintenance of specific neuronal connections in the brain. This is Protocadherin alpha-4 from Pan troglodytes (Chimpanzee).